A 130-amino-acid polypeptide reads, in one-letter code: Small ribosomal subunit protein uS8 (130 aa).

This sequence belongs to the universal ribosomal protein uS8 family. Component of the 40S ribosomal subunit. Part of the small subunit (SSU) processome, composed of more than 70 proteins and the RNA chaperone small nucleolar RNA (snoRNA) U3.

It is found in the cytoplasm. The protein resides in the nucleus. The protein localises to the nucleolus. Functionally, component of the small ribosomal subunit. Part of the small subunit (SSU) processome, first precursor of the small eukaryotic ribosomal subunit. During the assembly of the SSU processome in the nucleolus, many ribosome biogenesis factors, an RNA chaperone and ribosomal proteins associate with the nascent pre-rRNA and work in concert to generate RNA folding, modifications, rearrangements and cleavage as well as targeted degradation of pre-ribosomal RNA by the RNA exosome. Required for erythropoiesis during embryonic development. This is Small ribosomal subunit protein uS8 from Danio rerio (Zebrafish).